The following is a 140-amino-acid chain: Large ribosomal subunit protein uL14 (140 aa).

This sequence belongs to the universal ribosomal protein uL14 family. As to quaternary structure, part of the 50S ribosomal subunit. Forms a cluster with proteins L3 and L24e, part of which may contact the 16S rRNA in 2 intersubunit bridges.

In terms of biological role, binds to 23S rRNA. Forms part of two intersubunit bridges in the 70S ribosome. The protein is Large ribosomal subunit protein uL14 of Aeropyrum pernix (strain ATCC 700893 / DSM 11879 / JCM 9820 / NBRC 100138 / K1).